The following is a 378-amino-acid chain: Erythronate-4-phosphate dehydrogenase (378 aa).

Residues Ser-45 and Thr-66 each contribute to the substrate site. 2 residues coordinate NAD(+): Asp-146 and Thr-175. Arg-208 is a catalytic residue. Asp-232 contributes to the NAD(+) binding site. Glu-237 is an active-site residue. Catalysis depends on His-254, which acts as the Proton donor. Gly-257 contributes to the NAD(+) binding site. Tyr-258 lines the substrate pocket.

Belongs to the D-isomer specific 2-hydroxyacid dehydrogenase family. PdxB subfamily. As to quaternary structure, homodimer.

It localises to the cytoplasm. It carries out the reaction 4-phospho-D-erythronate + NAD(+) = (R)-3-hydroxy-2-oxo-4-phosphooxybutanoate + NADH + H(+). The protein operates within cofactor biosynthesis; pyridoxine 5'-phosphate biosynthesis; pyridoxine 5'-phosphate from D-erythrose 4-phosphate: step 2/5. In terms of biological role, catalyzes the oxidation of erythronate-4-phosphate to 3-hydroxy-2-oxo-4-phosphonooxybutanoate. In Salmonella agona (strain SL483), this protein is Erythronate-4-phosphate dehydrogenase.